A 303-amino-acid chain; its full sequence is MRVFSSIDELRHTLDALRRQGRTVGLVPTMGYLHAGHMELVSRARAENDIVVVSIFVNPLQFGPAEDLSKYPRDLERDAAMLRQAGVNFLFSPGVEDMYSRPMLTVVDVPDLGRELEGAVRPGHFAGVATVVCKLFNIVQPQTAYFGAKDYQQVVIIKRMVDDLALPVRLISVPTVRDSDGLALSSRNVYLSEAERRAAVIVPQTLDEAERLVADGLTDPVELEARLTAFLSREPLAKPEVVAVRDAATLQPVTSIADPVVVALFVRVGSTRLLDNRVVGSNRFVGNNRVAGGQSLPGKGVTR.

30 to 37 (MGYLHAGH) serves as a coordination point for ATP. Histidine 37 (proton donor) is an active-site residue. (R)-pantoate is bound at residue glutamine 61. Beta-alanine is bound at residue glutamine 61. 147–150 (GAKD) serves as a coordination point for ATP. Glutamine 153 contacts (R)-pantoate. ATP is bound by residues valine 176 and 184-187 (LSSR).

Belongs to the pantothenate synthetase family. As to quaternary structure, homodimer.

The protein resides in the cytoplasm. The enzyme catalyses (R)-pantoate + beta-alanine + ATP = (R)-pantothenate + AMP + diphosphate + H(+). Its pathway is cofactor biosynthesis; (R)-pantothenate biosynthesis; (R)-pantothenate from (R)-pantoate and beta-alanine: step 1/1. Its function is as follows. Catalyzes the condensation of pantoate with beta-alanine in an ATP-dependent reaction via a pantoyl-adenylate intermediate. In Rhizobium johnstonii (strain DSM 114642 / LMG 32736 / 3841) (Rhizobium leguminosarum bv. viciae), this protein is Pantothenate synthetase.